A 220-amino-acid polypeptide reads, in one-letter code: NADH-quinone oxidoreductase subunit I (220 aa).

2 consecutive 4Fe-4S ferredoxin-type domains span residues 71–102 (LQRLLDSGSERCIGCGLCEKICTSNCIRIITH) and 112–141 (DSYTINLGRCIYCGLCAEVCPELAIVMGNR). 8 residues coordinate [4Fe-4S] cluster: cysteine 82, cysteine 85, cysteine 88, cysteine 92, cysteine 121, cysteine 124, cysteine 127, and cysteine 131. Positions 187–220 (MQATPLDYVQEPSKEESKEETPTRSESHKGDENV) are disordered. A compositionally biased stretch (basic and acidic residues) spans 198–220 (PSKEESKEETPTRSESHKGDENV).

This sequence belongs to the complex I 23 kDa subunit family. NDH-1 is composed of 14 different subunits. Subunits NuoA, H, J, K, L, M, N constitute the membrane sector of the complex. Requires [4Fe-4S] cluster as cofactor.

It is found in the cell inner membrane. The catalysed reaction is a quinone + NADH + 5 H(+)(in) = a quinol + NAD(+) + 4 H(+)(out). Its function is as follows. NDH-1 shuttles electrons from NADH, via FMN and iron-sulfur (Fe-S) centers, to quinones in the respiratory chain. The immediate electron acceptor for the enzyme in this species is believed to be ubiquinone. Couples the redox reaction to proton translocation (for every two electrons transferred, four hydrogen ions are translocated across the cytoplasmic membrane), and thus conserves the redox energy in a proton gradient. In Helicobacter pylori (strain G27), this protein is NADH-quinone oxidoreductase subunit I.